Consider the following 97-residue polypeptide: MNVKPLGARVVIKPLEKEERTKSGIVLPDTAKEKPQQGKVIAVGPGRTLESGTKVELEVKEGDTVIFSKYAGTEVKIDGEEYIILDGERDILAIVQG.

It belongs to the GroES chaperonin family. Heptamer of 7 subunits arranged in a ring. Interacts with the chaperonin GroEL.

Its subcellular location is the cytoplasm. Together with the chaperonin GroEL, plays an essential role in assisting protein folding. The GroEL-GroES system forms a nano-cage that allows encapsulation of the non-native substrate proteins and provides a physical environment optimized to promote and accelerate protein folding. GroES binds to the apical surface of the GroEL ring, thereby capping the opening of the GroEL channel. The polypeptide is Co-chaperonin GroES (Symbiobacterium thermophilum (strain DSM 24528 / JCM 14929 / IAM 14863 / T)).